Reading from the N-terminus, the 144-residue chain is Large ribosomal subunit protein uL13 (144 aa).

The protein belongs to the universal ribosomal protein uL13 family. As to quaternary structure, part of the 50S ribosomal subunit.

Its function is as follows. This protein is one of the early assembly proteins of the 50S ribosomal subunit, although it is not seen to bind rRNA by itself. It is important during the early stages of 50S assembly. In Clostridium perfringens (strain 13 / Type A), this protein is Large ribosomal subunit protein uL13.